Here is a 217-residue protein sequence, read N- to C-terminus: 3,4-dihydroxy-2-butanone 4-phosphate synthase (217 aa).

Residues 40-41 (RE), Asp45, 153-157 (RRGHT), and Glu177 contribute to the D-ribulose 5-phosphate site. Glu41 serves as a coordination point for Mg(2+). Position 156 (His156) interacts with Mg(2+).

This sequence belongs to the DHBP synthase family. Homodimer. Mg(2+) is required as a cofactor. Requires Mn(2+) as cofactor.

It catalyses the reaction D-ribulose 5-phosphate = (2S)-2-hydroxy-3-oxobutyl phosphate + formate + H(+). Its pathway is cofactor biosynthesis; riboflavin biosynthesis; 2-hydroxy-3-oxobutyl phosphate from D-ribulose 5-phosphate: step 1/1. Its function is as follows. Catalyzes the conversion of D-ribulose 5-phosphate to formate and 3,4-dihydroxy-2-butanone 4-phosphate. In Aliivibrio fischeri (Vibrio fischeri), this protein is 3,4-dihydroxy-2-butanone 4-phosphate synthase.